A 171-amino-acid polypeptide reads, in one-letter code: Adenine phosphoribosyltransferase (171 aa).

Belongs to the purine/pyrimidine phosphoribosyltransferase family. As to quaternary structure, homodimer.

It localises to the cytoplasm. The enzyme catalyses AMP + diphosphate = 5-phospho-alpha-D-ribose 1-diphosphate + adenine. It participates in purine metabolism; AMP biosynthesis via salvage pathway; AMP from adenine: step 1/1. Its function is as follows. Catalyzes a salvage reaction resulting in the formation of AMP, that is energically less costly than de novo synthesis. This chain is Adenine phosphoribosyltransferase, found in Geotalea uraniireducens (strain Rf4) (Geobacter uraniireducens).